Here is a 618-residue protein sequence, read N- to C-terminus: UvrABC system protein C (618 aa).

One can recognise a GIY-YIG domain in the interval 13–92; the sequence is DKPGVYLMKN…IKKYRPKYNI (80 aa). One can recognise a UVR domain in the interval 204–239; sequence LDIVENFKLNMEKAAGNLEFEKAAMLRDKINIIEKI.

This sequence belongs to the UvrC family. In terms of assembly, interacts with UvrB in an incision complex.

Its subcellular location is the cytoplasm. Its function is as follows. The UvrABC repair system catalyzes the recognition and processing of DNA lesions. UvrC both incises the 5' and 3' sides of the lesion. The N-terminal half is responsible for the 3' incision and the C-terminal half is responsible for the 5' incision. The polypeptide is UvrABC system protein C (Clostridium botulinum (strain 657 / Type Ba4)).